A 711-amino-acid polypeptide reads, in one-letter code: Origin recognition complex subunit 3 (711 aa).

Phosphoserine is present on residues Ser-23 and Ser-516.

This sequence belongs to the ORC3 family. As to quaternary structure, component of ORC, a complex composed of at least 6 subunits: ORC1, ORC2, ORC3, ORC4, ORC5 and ORC6. ORC is regulated in a cell-cycle dependent manner. It is sequentially assembled at the exit from anaphase of mitosis and disassembled as cells enter S phase. In terms of processing, multi-mono-ubiquitinated by OBI1; ubiquitination is important for efficient DNA replication origin site activation. Ubiquitination levels are low in mitotic and early G1-phAse cells and are induced in late G1-/early S-phase, peaking in S-phase and decrease toward the end of the cell cycle.

It is found in the nucleus. The protein localises to the chromosome. Its function is as follows. Component of the origin recognition complex (ORC) that binds origins of replication. DNA-binding is ATP-dependent. The specific DNA sequences that define origins of replication have not been identified yet. ORC is required to assemble the pre-replication complex necessary to initiate DNA replication. Binds histone H3 and H4 trimethylation marks H3K9me3, H3K27me3 and H4K20me3. In Homo sapiens (Human), this protein is Origin recognition complex subunit 3 (ORC3).